The chain runs to 87 residues: Large ribosomal subunit protein eL33 (87 aa).

Belongs to the eukaryotic ribosomal protein eL33 family.

The polypeptide is Large ribosomal subunit protein eL33 (Pyrococcus horikoshii (strain ATCC 700860 / DSM 12428 / JCM 9974 / NBRC 100139 / OT-3)).